A 209-amino-acid chain; its full sequence is Potassium-transporting ATPase KdpC subunit (209 aa).

Residues 18–38 (MLAVFTLFGLGLAYSLVATGI) traverse the membrane as a helical segment.

This sequence belongs to the KdpC family. As to quaternary structure, the system is composed of three essential subunits: KdpA, KdpB and KdpC.

It is found in the cell inner membrane. Part of the high-affinity ATP-driven potassium transport (or Kdp) system, which catalyzes the hydrolysis of ATP coupled with the electrogenic transport of potassium into the cytoplasm. This subunit acts as a catalytic chaperone that increases the ATP-binding affinity of the ATP-hydrolyzing subunit KdpB by the formation of a transient KdpB/KdpC/ATP ternary complex. The chain is Potassium-transporting ATPase KdpC subunit from Xanthomonas oryzae pv. oryzae (strain MAFF 311018).